Consider the following 2528-residue polypeptide: Squalestatin tetraketide synthase clz2 (2528 aa).

A Ketosynthase family 3 (KS3) domain is found at Thr14 to Ser409. Residues Cys187, His291, and His331 each act as for beta-ketoacyl synthase activity in the active site. Residues Val420–Thr457 form a disordered region. The segment covering Ala436–Gly452 has biased composition (low complexity). The malonyl-CoA:ACP transacylase (MAT) domain stretch occupies residues Gly538–Gln856. The segment at His925–Ser1063 is N-terminal hotdog fold. Residues His925–Gln1239 form the PKS/mFAS DH domain. The interval His925 to Gln1239 is dehydratase (DH) domain. His957 (proton acceptor; for dehydratase activity) is an active-site residue. Positions Thr1083–Gln1239 are C-terminal hotdog fold. Residue Asp1148 is the Proton donor; for dehydratase activity of the active site. The segment at Leu1390–Asp1590 is methyltransferase (CMet) domain. An enoyl reductase (ER) (ER) domain region spans residues Gly1817–Ile2130. Residues Ala2153 to Gln2331 form a ketoreductase (KR) domain region. The segment at Arg2408–Gly2430 is disordered. Residues Glu2441–Ser2518 form the Carrier domain. An O-(pantetheine 4'-phosphoryl)serine modification is found at Ser2478.

Its pathway is secondary metabolite biosynthesis. Functionally, highly reducing polyketide synthase (HR-PKS); part of the gene cluster that mediates the biosynthesis of squalestatin S1 (SQS1, also known as zaragozic acid A), a heavily oxidized fungal polyketide that offers potent cholesterol lowering activity by targeting squalene synthase (SS). SQS1 is composed of a 2,8-dioxobicyclic[3.2.1]octane-3,4,5-tricarboxyclic acid core that is connected to two lipophilic polyketide arms. These initial steps feature the priming of an unusual benzoic acid starter unit onto the highly reducing polyketide synthase clz14, followed by oxaloacetate extension and product release to generate a tricarboxylic acid containing product. The phenylalanine ammonia lyase (PAL) clz10 and the acyl-CoA ligase clz12 are involved in transforming phenylalanine into benzoyl-CoA. The citrate synthase-like protein clz17 is involved in connecting the C-alpha-carbons of the hexaketide chain and oxaloacetate to afford the tricarboxylic acid unit. The potential hydrolytic enzymes, clz11 and clz13, are in close proximity to pks2 and may participate in product release. On the other side, the tetraketide arm is synthesized by a the squalestatin tetraketide synthase clz2 and enzymatically esterified to the core in the last biosynthetic step, by the acetyltransferase clz6. The biosynthesis of the tetraketide must involve 3 rounds of chain extension. After the first and second rounds methyl-transfer occurs, and in all rounds of extension the ketoreductase and dehydratase are active. The enoyl reductase and C-MeT of clz2 are not active in the final round of extension. The acetyltransferase clz6 appears to have a broad substrate selectivity for its acyl CoA substrate, allowing the in vitro synthesis of novel squalestatins. The biosynthesis of SQS1 requires several oxidative steps likely performed by oxidoreductases clz3, clz15 and clz16. Finally, in support of the identification of the cluster as being responsible for SQS1 production, the cluster contains a gene encoding a putative squalene synthase (SS) clz20, suggesting a likely mechanism for self-resistance. This Cochliobolus lunatus (Filamentous fungus) protein is Squalestatin tetraketide synthase clz2.